The following is a 424-amino-acid chain: Protein arginine N-methyltransferase 2 (424 aa).

Disordered stretches follow at residues 67–89 (DEAQ…EQKS) and 151–212 (YEPL…SSRY). A compositionally biased stretch (polar residues) spans 71–89 (TETNGVNGETSSASTEQKS). Composition is skewed to low complexity over residues 163 to 173 (TGQGEDAANEP) and 187 to 201 (ETTA…ASTE). The region spanning 205–424 (PDVTSSRYLD…YRLPLCKFMD (220 aa)) is the RMT2 domain. Residues Tyr-212, Met-241, 261–266 (HGMGIV), 282–284 (EAH), 309–310 (WQ), and Asp-329 contribute to the S-adenosyl-L-methionine site.

This sequence belongs to the class I-like SAM-binding methyltransferase superfamily. RMT2 methyltransferase family. In terms of assembly, monomer.

It is found in the cytoplasm. It localises to the nucleus. In terms of biological role, S-adenosyl-L-methionine-dependent protein-arginine N-methyltransferase that methylates the delta-nitrogen atom of arginine residues to form N5-methylarginine (type IV) in target proteins. Monomethylates ribosomal protein L12. The protein is Protein arginine N-methyltransferase 2 of Aspergillus fumigatus (strain ATCC MYA-4609 / CBS 101355 / FGSC A1100 / Af293) (Neosartorya fumigata).